A 400-amino-acid polypeptide reads, in one-letter code: Argininosuccinate synthase (400 aa).

ATP-binding positions include 10–18 and Ala38; that span reads AYSGGVDTS. Tyr89 contributes to the L-citrulline binding site. Gly119 is a binding site for ATP. 3 residues coordinate L-aspartate: Thr121, Asn125, and Asp126. Residue Asn125 coordinates L-citrulline. L-citrulline is bound by residues Arg129, Ser177, Ser186, Glu262, and Tyr274.

This sequence belongs to the argininosuccinate synthase family. Type 1 subfamily. Homotetramer.

The protein localises to the cytoplasm. The catalysed reaction is L-citrulline + L-aspartate + ATP = 2-(N(omega)-L-arginino)succinate + AMP + diphosphate + H(+). It functions in the pathway amino-acid biosynthesis; L-arginine biosynthesis; L-arginine from L-ornithine and carbamoyl phosphate: step 2/3. The sequence is that of Argininosuccinate synthase from Prochlorococcus marinus (strain NATL1A).